A 164-amino-acid chain; its full sequence is uncharacterized protein (164 aa).

Residues 107–136 are disordered; sequence QSESGGSGSNSRSSSDTTEPTDPPAPVRKT.

This is an uncharacterized protein from Escherichia coli (Bacteriophage T4).